We begin with the raw amino-acid sequence, 536 residues long: Nucleolar protein 58 (536 aa).

Thr-34 carries the post-translational modification Phosphothreonine. Ser-109 is modified (phosphoserine). A Glycyl lysine isopeptide (Lys-Gly) (interchain with G-Cter in SUMO2) cross-link involves residue Lys-157. Positions 282 to 400 (IAPNVTVMVG…LEARLRILED (119 aa)) constitute a Nop domain. A phosphoserine mark is found at Ser-304 and Ser-351. Glycyl lysine isopeptide (Lys-Gly) (interchain with G-Cter in SUMO2) cross-links involve residues Lys-353, Lys-411, Lys-415, Lys-422, Lys-426, Lys-441, Lys-444, and Lys-465. Residues 414–427 (AKAEKYEHKSEVKT) are compositionally biased toward basic and acidic residues. A disordered region spans residues 414–440 (AKAEKYEHKSEVKTYDPSGDSTLPTCS). Residue Lys-467 forms a Glycyl lysine isopeptide (Lys-Gly) (interchain with G-Cter in SUMO); alternate linkage. Lys-467 is covalently cross-linked (Glycyl lysine isopeptide (Lys-Gly) (interchain with G-Cter in SUMO1); alternate). Lys-467 is covalently cross-linked (Glycyl lysine isopeptide (Lys-Gly) (interchain with G-Cter in SUMO2); alternate). Residues 470-488 (VEEEMEEEEAEEEQVVEEE) are compositionally biased toward acidic residues. Residues 470 to 536 (VEEEMEEEEA…KKKKKKDAED (67 aa)) are disordered. A Glycyl lysine isopeptide (Lys-Gly) (interchain with G-Cter in SUMO2) cross-link involves residue Lys-492. Over residues 492–502 (KKKKKKDKKKH) the composition is skewed to basic residues. A Glycyl lysine isopeptide (Lys-Gly) (interchain with G-Cter in SUMO); alternate cross-link involves residue Lys-504. Lys-504 participates in a covalent cross-link: Glycyl lysine isopeptide (Lys-Gly) (interchain with G-Cter in SUMO2); alternate. A phosphoserine mark is found at Ser-509 and Ser-521. Basic residues predominate over residues 524 to 536 (KKKKKKKKKDAED).

The protein belongs to the NOP5/NOP56 family. As to quaternary structure, core component of box C/D small nucleolar ribonucleoprotein (snoRNP) particles; the core proteins SNU13, NOP56, NOP58 and FBL or FBLL1 assemble stepwise onto the snoRNA. Interacts with NOLC1/Nopp140. Interacts with NOPCHAP1, NUFIP1, RUVBL1 and RUVBL2; NOPCHAP1 bridges the association of NOP58 with RUVBL1:RUVBL2 and NUFIP1. Interacts with PIH1D1. Part of the small subunit (SSU) processome, composed of more than 70 proteins and the RNA chaperone small nucleolar RNA (snoRNA) U3. In terms of processing, sumoylation is essential for high-affinity binding to snoRNAs.

Its subcellular location is the nucleus. The protein resides in the nucleolus. The protein localises to the nucleoplasm. In terms of biological role, required for the biogenesis of box C/D snoRNAs such as U3, U8 and U14 snoRNAs. Part of the small subunit (SSU) processome, first precursor of the small eukaryotic ribosomal subunit. During the assembly of the SSU processome in the nucleolus, many ribosome biogenesis factors, an RNA chaperone and ribosomal proteins associate with the nascent pre-rRNA and work in concert to generate RNA folding, modifications, rearrangements and cleavage as well as targeted degradation of pre-ribosomal RNA by the RNA exosome. Core component of box C/D small nucleolar ribonucleoprotein (snoRNP) complexes that function in methylation of multiple sites on ribosomal RNAs (rRNAs) and messenger RNAs (mRNAs). This chain is Nucleolar protein 58 (Nop58), found in Mus musculus (Mouse).